Consider the following 512-residue polypeptide: Dihydroniloticin synthase CYP71CD2 (512 aa).

A helical transmembrane segment spans residues 1 to 21 (MNLQLDYFSITSFLVFLVVLF). Heme is bound at residue Cys-449.

Belongs to the cytochrome P450 family. Heme serves as cofactor.

Its subcellular location is the membrane. The enzyme catalyses tirucalla-7,24-dien-3beta-ol + 2 reduced [NADPH--hemoprotein reductase] + 2 O2 = dihydroniloticin + 2 oxidized [NADPH--hemoprotein reductase] + 2 H2O + 2 H(+). It participates in secondary metabolite biosynthesis; terpenoid biosynthesis. In terms of biological role, monooxygenase involved in the biosynthesis of limonoids triterpene natural products such as azadirachtin, an antifeedant widely used as bioinsecticide, and possessing many medicinal applications including anti-tumoral, anti-malarial, anti-rheumatic, antibacterial, anti-inflammatory, anti-pyretic and diuretic effects. Catalyzes the conversion of tirucalladienol to dihydroniloticin. This is Dihydroniloticin synthase CYP71CD2 from Azadirachta indica (Neem tree).